The chain runs to 566 residues: CTP synthase (566 aa).

The segment at 1–270 is amidoligase domain; sequence MTKFVFVTGG…DGLICDKLRL (270 aa). Ser-13 is a binding site for CTP. Ser-13 is a UTP binding site. Residues 14 to 19 and Asp-71 each bind ATP; that span reads SLGKGI. Mg(2+) contacts are provided by Asp-71 and Glu-144. Residues 151 to 153, 191 to 196, and Lys-227 each bind CTP; these read DIE and KTKPTQ. Residues 191-196 and Lys-227 each bind UTP; that span reads KTKPTQ. A Glutamine amidotransferase type-1 domain is found at 295 to 547; sequence SIAMVGKYVD…IAATLEQRSA (253 aa). Gly-356 provides a ligand contact to L-glutamine. Cys-383 (nucleophile; for glutamine hydrolysis) is an active-site residue. Residues 384 to 387, Glu-407, and Arg-473 each bind L-glutamine; that span reads LGMQ. Catalysis depends on residues His-520 and Glu-522.

The protein belongs to the CTP synthase family. As to quaternary structure, homotetramer.

It catalyses the reaction UTP + L-glutamine + ATP + H2O = CTP + L-glutamate + ADP + phosphate + 2 H(+). It carries out the reaction L-glutamine + H2O = L-glutamate + NH4(+). The enzyme catalyses UTP + NH4(+) + ATP = CTP + ADP + phosphate + 2 H(+). It participates in pyrimidine metabolism; CTP biosynthesis via de novo pathway; CTP from UDP: step 2/2. With respect to regulation, allosterically activated by GTP, when glutamine is the substrate; GTP has no effect on the reaction when ammonia is the substrate. The allosteric effector GTP functions by stabilizing the protein conformation that binds the tetrahedral intermediate(s) formed during glutamine hydrolysis. Inhibited by the product CTP, via allosteric rather than competitive inhibition. In terms of biological role, catalyzes the ATP-dependent amination of UTP to CTP with either L-glutamine or ammonia as the source of nitrogen. Regulates intracellular CTP levels through interactions with the four ribonucleotide triphosphates. This chain is CTP synthase, found in Polaromonas naphthalenivorans (strain CJ2).